We begin with the raw amino-acid sequence, 195 residues long: N-(5'-phosphoribosyl)anthranilate isomerase (195 aa).

This sequence belongs to the TrpF family.

The catalysed reaction is N-(5-phospho-beta-D-ribosyl)anthranilate = 1-(2-carboxyphenylamino)-1-deoxy-D-ribulose 5-phosphate. It participates in amino-acid biosynthesis; L-tryptophan biosynthesis; L-tryptophan from chorismate: step 3/5. The sequence is that of N-(5'-phosphoribosyl)anthranilate isomerase from Streptococcus gordonii (strain Challis / ATCC 35105 / BCRC 15272 / CH1 / DL1 / V288).